Consider the following 398-residue polypeptide: Methionine import ATP-binding protein MetN 2 (398 aa).

In terms of domain architecture, ABC transporter spans 43–282 (VSLEQVGKVF…PRHGATRALL (240 aa)). An ATP-binding site is contributed by 79 to 86 (GRSGAGKS).

Belongs to the ABC transporter superfamily. Methionine importer (TC 3.A.1.24) family. In terms of assembly, the complex is composed of two ATP-binding proteins (MetN), two transmembrane proteins (MetI) and a solute-binding protein (MetQ).

The protein resides in the cell inner membrane. It carries out the reaction L-methionine(out) + ATP + H2O = L-methionine(in) + ADP + phosphate + H(+). The enzyme catalyses D-methionine(out) + ATP + H2O = D-methionine(in) + ADP + phosphate + H(+). Its function is as follows. Part of the ABC transporter complex MetNIQ involved in methionine import. Responsible for energy coupling to the transport system. This chain is Methionine import ATP-binding protein MetN 2, found in Burkholderia lata (strain ATCC 17760 / DSM 23089 / LMG 22485 / NCIMB 9086 / R18194 / 383).